A 311-amino-acid chain; its full sequence is Very-long-chain 3-oxoacyl-CoA reductase-B (311 aa).

Residues 8–28 (LFWVGAVTVLWLSVSSLWSLI) traverse the membrane as a helical segment. NADP(+) is bound at residue 48–77 (GKWAVVTGATDGIGKAYAEELARRGFAIVL). A helical membrane pass occupies residues 125 to 145 (IGVLVNNVGVSYSYPEFFLNI). Residue serine 187 coordinates substrate. The active-site Proton acceptor is tyrosine 200. The helical transmembrane segment at 269–289 (GYLPHAIMGWVTASLLPAKLL) threads the bilayer.

It belongs to the short-chain dehydrogenases/reductases (SDR) family. 17-beta-HSD 3 subfamily.

It is found in the endoplasmic reticulum membrane. The catalysed reaction is a very-long-chain (3R)-3-hydroxyacyl-CoA + NADP(+) = a very-long-chain 3-oxoacyl-CoA + NADPH + H(+). The enzyme catalyses 17beta-estradiol + NAD(+) = estrone + NADH + H(+). It catalyses the reaction 17beta-estradiol + NADP(+) = estrone + NADPH + H(+). Its pathway is lipid metabolism; fatty acid biosynthesis. It functions in the pathway steroid biosynthesis; estrogen biosynthesis. In terms of biological role, catalyzes the second of the four reactions of the long-chain fatty acids elongation cycle. This endoplasmic reticulum-bound enzymatic process, allows the addition of two carbons to the chain of long- and very long-chain fatty acids/VLCFAs per cycle. This enzyme has a 3-ketoacyl-CoA reductase activity, reducing 3-ketoacyl-CoA to 3-hydroxyacyl-CoA, within each cycle of fatty acid elongation. Thereby, it may participate in the production of VLCFAs of different chain lengths that are involved in multiple biological processes as precursors of membrane lipids and lipid mediators. May also catalyze the transformation of estrone (E1) into estradiol (E2) and play a role in estrogen formation. This chain is Very-long-chain 3-oxoacyl-CoA reductase-B (hsd17b12b), found in Danio rerio (Zebrafish).